Consider the following 140-residue polypeptide: Coiled-coil domain-containing protein 126 (140 aa).

The first 35 residues, 1–35 (MFRTISRKNMSQKLSFLLLVFGLIWGLMLLHYTLQ), serve as a signal peptide directing secretion. N110 is a glycosylation site (N-linked (GlcNAc...) asparagine). Low complexity predominate over residues 118–130 (NGTNGNLVPVTTN). The interval 118 to 140 (NGTNGNLVPVTTNKRTSVSGSVR) is disordered. The segment covering 131–140 (KRTSVSGSVR) has biased composition (polar residues).

The protein resides in the secreted. The polypeptide is Coiled-coil domain-containing protein 126 (Ccdc126) (Mus musculus (Mouse)).